The chain runs to 94 residues: Acylphosphatase (94 aa).

One can recognise an Acylphosphatase-like domain in the interval 5–94 (RLTAFVHGHV…PRDVEGFVER (90 aa)). Catalysis depends on residues Arg20 and Asn38.

The protein belongs to the acylphosphatase family.

It carries out the reaction an acyl phosphate + H2O = a carboxylate + phosphate + H(+). This chain is Acylphosphatase (acyP), found in Corynebacterium glutamicum (strain ATCC 13032 / DSM 20300 / JCM 1318 / BCRC 11384 / CCUG 27702 / LMG 3730 / NBRC 12168 / NCIMB 10025 / NRRL B-2784 / 534).